The following is a 544-amino-acid chain: MRALSGPRLMLCGLLLLLFQAPCALGLAPLSRGHLCRTRPTDLVFVVDSSRSVRPVEFEKVKVFLSQVIESLDVGPNATRVGLVNYASSVKQEFPLRAHSSKAELLQAVRRIQPLSTGTMTGLAIQFAITKALSDAEGGRPRSPDISKVVIVVTDGRPQDSVRDVSARARAGGIELFAIGVGRVDKATLQQIASEPQDEHVDYVESYSVIEKLSKKFQEAFCLVSDLCATGDHDCEQVCVSSPGSYTCACREGFTLNSDGKTCNVCNGGGGSSATDLVFLIDGSKSVRPENFELVKKFINQIVDTLDVSDKLAQVGLVQYSSSVRQEFPLGRFHTKKDIKAAVRNMSYMEKGTMTGAALKYLIDNSFTVSSGARPGAQKVGIVFTDGRSQDYINDAAKKAKDLGFKMFAVGVGNAVEDELREIASEPVAEHYFYTADFKTINQIGKKLQKRICVEEDPCACESIVKFQTKVEGLLQALTRKHILSQKPLRGEGAVRRALWWRGGESLAPCVVGSGRLLLKTGWILAREAGLGFGTEKGEAETKS.

An N-terminal signal peptide occupies residues Met-1–Gly-26. One can recognise a VWFA 1 domain in the interval Asp-42–Phe-217. Asn-77 carries N-linked (GlcNAc...) asparagine glycosylation. Residues Val-224 to Asn-264 form the EGF-like domain. Cystine bridges form between Cys-228–Cys-239, Cys-235–Cys-248, and Cys-250–Cys-263. The VWFA 2 domain occupies Asp-276–Leu-448. An N-linked (GlcNAc...) asparagine glycan is attached at Asn-345.

In terms of assembly, homotrimer. Part of a complex composed of MATN1 (via VWFA1 domain), type 2 collagens and type 6 collagens. Forms a complex (via covalent bonds) with ACAN; the interaction increases in abundance with increasing age of the organism via an increase in occupancy of MATN1 binding sites. Interacts with COMP. N-glycosylated; reduces binding affinity for type 2 collagens. As to expression, expressed in trachea from fetus into adulthood (at protein level).

It is found in the secreted. It localises to the extracellular space. Its subcellular location is the extracellular matrix. In terms of biological role, a major component of the extracellular matrix of non-articular cartilage. Binds to type 2 collagens and forms long concatenated protein networks as part of the extracellular matrix. Required for the network-like organization and bundling of collagen fibrils surrounding chondrocytes in the zones of maturation and hypertrophy. Required for mechanotransduction and adaption to mechanical loading in cartilage chondrocytes, resulting in an increase in expression of the extracellular matrix components ACAN and COL2A1. Acts as a moderator of angiogenesis in response to injury. This Bos taurus (Bovine) protein is Matrilin-1.